The sequence spans 256 residues: Triosephosphate isomerase (256 aa).

Position 9-11 (Asn-9–Lys-11) interacts with substrate. The Electrophile role is filled by His-97. The Proton acceptor role is filled by Glu-169. Substrate contacts are provided by residues Gly-175, Ser-214, and Gly-235 to Gly-236.

The protein belongs to the triosephosphate isomerase family. In terms of assembly, homodimer.

Its subcellular location is the cytoplasm. The catalysed reaction is D-glyceraldehyde 3-phosphate = dihydroxyacetone phosphate. The protein operates within carbohydrate biosynthesis; gluconeogenesis. It participates in carbohydrate degradation; glycolysis; D-glyceraldehyde 3-phosphate from glycerone phosphate: step 1/1. Involved in the gluconeogenesis. Catalyzes stereospecifically the conversion of dihydroxyacetone phosphate (DHAP) to D-glyceraldehyde-3-phosphate (G3P). This is Triosephosphate isomerase from Vibrio parahaemolyticus serotype O3:K6 (strain RIMD 2210633).